The chain runs to 436 residues: Adenylosuccinate synthetase (436 aa).

GTP contacts are provided by residues 12–18 (GDEGKGK) and 40–42 (GHT). Asp-13 (proton acceptor) is an active-site residue. Residues Asp-13 and Gly-40 each contribute to the Mg(2+) site. IMP is bound by residues 13–16 (DEGK), 38–41 (NAGH), Thr-128, Arg-142, Gln-223, Thr-238, and Arg-302. His-41 functions as the Proton donor in the catalytic mechanism. 298-304 (TTTGRRR) is a binding site for substrate. Residues Arg-304, 330-332 (KLD), and 412-414 (SLG) contribute to the GTP site.

Belongs to the adenylosuccinate synthetase family. Homodimer. It depends on Mg(2+) as a cofactor.

Its subcellular location is the cytoplasm. It catalyses the reaction IMP + L-aspartate + GTP = N(6)-(1,2-dicarboxyethyl)-AMP + GDP + phosphate + 2 H(+). It functions in the pathway purine metabolism; AMP biosynthesis via de novo pathway; AMP from IMP: step 1/2. Plays an important role in the de novo pathway of purine nucleotide biosynthesis. Catalyzes the first committed step in the biosynthesis of AMP from IMP. This Prochlorococcus marinus (strain MIT 9215) protein is Adenylosuccinate synthetase.